The chain runs to 77 residues: Small ribosomal subunit protein bS18 (77 aa).

It belongs to the bacterial ribosomal protein bS18 family. Part of the 30S ribosomal subunit. Forms a tight heterodimer with protein bS6.

Functionally, binds as a heterodimer with protein bS6 to the central domain of the 16S rRNA, where it helps stabilize the platform of the 30S subunit. The chain is Small ribosomal subunit protein bS18 from Bacillus thuringiensis subsp. konkukian (strain 97-27).